The primary structure comprises 221 residues: GTP cyclohydrolase III (221 aa).

Belongs to the archaeal-type GTP cyclohydrolase family.

It catalyses the reaction GTP + 3 H2O = 2-amino-5-formylamino-6-(5-phospho-D-ribosylamino)pyrimidin-4(3H)-one + 2 phosphate + 2 H(+). Its function is as follows. Catalyzes the formation of 2-amino-5-formylamino-6-ribofuranosylamino-4(3H)-pyrimidinone ribonucleotide monophosphate and inorganic phosphate from GTP. Also has an independent pyrophosphate phosphohydrolase activity. The protein is GTP cyclohydrolase III of Pyrobaculum neutrophilum (strain DSM 2338 / JCM 9278 / NBRC 100436 / V24Sta) (Thermoproteus neutrophilus).